The following is a 486-amino-acid chain: N-succinylglutamate 5-semialdehyde dehydrogenase (486 aa).

221 to 226 is a binding site for NAD(+); the sequence is GSSATG. Catalysis depends on residues Glu-244 and Cys-278.

The protein belongs to the aldehyde dehydrogenase family. AstD subfamily.

The enzyme catalyses N-succinyl-L-glutamate 5-semialdehyde + NAD(+) + H2O = N-succinyl-L-glutamate + NADH + 2 H(+). Its pathway is amino-acid degradation; L-arginine degradation via AST pathway; L-glutamate and succinate from L-arginine: step 4/5. In terms of biological role, catalyzes the NAD-dependent reduction of succinylglutamate semialdehyde into succinylglutamate. The sequence is that of N-succinylglutamate 5-semialdehyde dehydrogenase from Chromobacterium violaceum (strain ATCC 12472 / DSM 30191 / JCM 1249 / CCUG 213 / NBRC 12614 / NCIMB 9131 / NCTC 9757 / MK).